A 49-amino-acid chain; its full sequence is MQEERNIWNWGFTSGAENWNGRLAMLGFIAALLTESLTGQGTLHFLGIL.

Belongs to the ELIP/psbS family.

The protein localises to the plastid. The protein resides in the cyanelle. Its function is as follows. Possible role in chlorophyll and/or carotenoid binding. This is an uncharacterized protein from Cyanophora paradoxa.